Consider the following 199-residue polypeptide: Minor spike protein H (199 aa).

Residues 171-199 (EDSNGPRLSNLREEKKPNQMPLKNGKLNT) are disordered.

The protein belongs to the microviridae H protein family.

It localises to the virion. Functionally, probably triggers with protein G the injection of the phage DNA into the host upon conformational changes induced by virus-host receptor interaction. This Bdellovibrio bacteriovorus (Bacteriophage phiMH2K) protein is Minor spike protein H.